Here is a 309-residue protein sequence, read N- to C-terminus: UDP-N-acetylenolpyruvoylglucosamine reductase (309 aa).

An FAD-binding PCMH-type domain is found at 25-188 (RVGGPADWLF…TSVTLQGNRE (164 aa)). Arg168 is a catalytic residue. The segment at 202-231 (AKRDATQPTKALTAGSTFRNPAGFSSTGQA) is disordered. Residues 207-231 (TQPTKALTAGSTFRNPAGFSSTGQA) are compositionally biased toward polar residues. The Proton donor role is filled by Ser217. Residue Glu299 is part of the active site.

This sequence belongs to the MurB family. FAD is required as a cofactor.

Its subcellular location is the cytoplasm. The catalysed reaction is UDP-N-acetyl-alpha-D-muramate + NADP(+) = UDP-N-acetyl-3-O-(1-carboxyvinyl)-alpha-D-glucosamine + NADPH + H(+). It functions in the pathway cell wall biogenesis; peptidoglycan biosynthesis. Its function is as follows. Cell wall formation. This chain is UDP-N-acetylenolpyruvoylglucosamine reductase, found in Jannaschia sp. (strain CCS1).